The following is a 468-amino-acid chain: Beta-amylase (468 aa).

A signal peptide spans 1-36; sequence MTLYRSLWKKGCMLLLSLVLSLTAFIGSPSNTASAA. Residue Asp76 participates in substrate binding. 2 residues coordinate Ca(2+): Glu83 and Asp87. His116 and Asp124 together coordinate substrate. Cys118 and Cys126 are oxidised to a cystine. Glu170 is a Ca(2+) binding site. The Proton donor role is filled by Glu198. The substrate site is built by Lys314, His319, and Thr357. Glu394 (proton acceptor) is an active-site residue. Substrate contacts are provided by residues 395 to 396 and Arg423; that span reads NA.

The protein belongs to the glycosyl hydrolase 14 family. Ca(2+) serves as cofactor.

The enzyme catalyses Hydrolysis of (1-&gt;4)-alpha-D-glucosidic linkages in polysaccharides so as to remove successive maltose units from the non-reducing ends of the chains.. The chain is Beta-amylase from Cytobacillus firmus (Bacillus firmus).